The following is a 176-amino-acid chain: NADH-quinone oxidoreductase subunit 10 (176 aa).

The next 5 helical transmembrane spans lie at 2-22 (SLLE…VVTL), 26-46 (IHAA…YVAL), 56-76 (VIVY…LLFA), 91-111 (PLAA…LWGL), and 137-157 (FVLL…VALV).

Belongs to the complex I subunit 6 family. In terms of assembly, NDH-1 is composed of 15 different subunits, Nqo1 to Nqo15. The complex has a L-shaped structure, with the hydrophobic arm (subunits Nqo7, Nqo8 and Nqo10 to Nqo14) embedded in the membrane and the hydrophilic peripheral arm (subunits Nqo1 to Nqo6, Nqo9 and Nqo15) protruding into the bacterial cytoplasm. The hydrophilic domain contains all the redox centers.

Its subcellular location is the cell inner membrane. It carries out the reaction a quinone + NADH + 5 H(+)(in) = a quinol + NAD(+) + 4 H(+)(out). In terms of biological role, NDH-1 shuttles electrons from NADH, via FMN and iron-sulfur (Fe-S) centers, to quinones in the respiratory chain. The immediate electron acceptor for the enzyme in this species is menaquinone. Couples the redox reaction to proton translocation (for every two electrons transferred, four hydrogen ions are translocated across the cytoplasmic membrane), and thus conserves the redox energy in a proton gradient required for the synthesis of ATP. The sequence is that of NADH-quinone oxidoreductase subunit 10 (nqo10) from Thermus thermophilus (strain ATCC 27634 / DSM 579 / HB8).